The sequence spans 319 residues: tRNA uridine(34) hydroxylase (319 aa).

The Rhodanese domain occupies 125–219 (LDENTVVIDA…YGKDPEVQGD (95 aa)). The Cysteine persulfide intermediate role is filled by Cys-179.

This sequence belongs to the TrhO family.

It carries out the reaction uridine(34) in tRNA + AH2 + O2 = 5-hydroxyuridine(34) in tRNA + A + H2O. Its function is as follows. Catalyzes oxygen-dependent 5-hydroxyuridine (ho5U) modification at position 34 in tRNAs. In Lactococcus lactis subsp. lactis (strain IL1403) (Streptococcus lactis), this protein is tRNA uridine(34) hydroxylase.